The following is a 604-amino-acid chain: Protein TAX4 (604 aa).

Disordered stretches follow at residues 38 to 77 (HPNGNAGSAERPRHLKVESAPVVKSEPSLPRMRQPEPRSI), 132 to 249 (SFSN…RQQE), 267 to 299 (GTLPDLIPRSQRKTSKPRFKHRLLRSPEQQQEN), 338 to 380 (DETF…KGLK), and 394 to 428 (PFPHHHHHHHQLHNPNSHHLHTHHHTSSHKFNEDK). Over residues 176–185 (YDNNVRSRSI) the composition is skewed to polar residues. 2 stretches are compositionally biased toward low complexity: residues 186 to 203 (SPQVSYSTSLSSSCSISS) and 224 to 240 (SMSSYSLASKASAKASL). Composition is skewed to basic residues over residues 276-290 (SQRKTSKPRFKHRLL), 366-379 (KKKKSRRSKIKKGL), and 396-421 (PHHHHHHHQLHNPNSHHLHTHHHTSS). The EH domain occupies 469-559 (ANEDDESHLQ…RVWNSVDGYV (91 aa)).

Belongs to the IRS4 family. Interacts with INP51.

Its function is as follows. With IRS4, acts as a positive regulator of INP51 activity and phosphatidylinositol 4,5-bisphosphate turnover. Negatively regulates signaling through the cell integrity pathway, including the MAP kinase SLT2. This Saccharomyces cerevisiae (strain ATCC 204508 / S288c) (Baker's yeast) protein is Protein TAX4 (TAX4).